The chain runs to 429 residues: SH2 domain-containing protein 5 (429 aa).

The SH2 domain occupies W302–Y398.

As to quaternary structure, interacts with BCR. Highly expressed in brain, particularly in Purkinjie cells in the cerebellum and the cornu ammonis of the hippocampus.

The protein resides in the postsynaptic density. In terms of biological role, may be involved in synaptic plasticity regulation through the control of Rac-GTP levels. The chain is SH2 domain-containing protein 5 from Mus musculus (Mouse).